A 215-amino-acid polypeptide reads, in one-letter code: Large ribosomal subunit protein uL4 (215 aa).

The segment at 46–76 (TAKSKNRAEVSGGGRKPWAQKGGGRARAGSI) is disordered. Residues 56–71 (SGGGRKPWAQKGGGRA) are compositionally biased toward gly residues.

It belongs to the universal ribosomal protein uL4 family. Part of the 50S ribosomal subunit.

Its function is as follows. One of the primary rRNA binding proteins, this protein initially binds near the 5'-end of the 23S rRNA. It is important during the early stages of 50S assembly. It makes multiple contacts with different domains of the 23S rRNA in the assembled 50S subunit and ribosome. In terms of biological role, forms part of the polypeptide exit tunnel. The chain is Large ribosomal subunit protein uL4 from Helicobacter pylori (strain HPAG1).